A 147-amino-acid polypeptide reads, in one-letter code: Putative cystatin-9-like protein CST9LP1 (147 aa).

A signal peptide spans 1 to 28 (MWSLPPSRALSCAPLLLLFSFQFLVTYA). Residues C98 and C108 are joined by a disulfide bond. N-linked (GlcNAc...) asparagine glycans are attached at residues N117 and N139. C122 and C142 are disulfide-bonded.

The protein belongs to the cystatin family.

Its subcellular location is the secreted. The sequence is that of Putative cystatin-9-like protein CST9LP1 (CST9LP1) from Homo sapiens (Human).